Consider the following 1083-residue polypeptide: Centrosomal protein of 131 kDa (1083 aa).

Disordered regions lie at residues 1–155 (MKGT…AGPR) and 220–258 (GSES…EVTE). The interaction with PLK4 stretch occupies residues 1 to 250 (MKGTRAIGSV…RNNTGGSTGL (250 aa)). A phosphoserine mark is found at Ser-14 and Ser-35. Position 47 is a phosphoserine; by MAPKAPK2 (Ser-47). The span at 68–87 (QAINNLRRSNSTTQVSQPRS) shows a compositional bias: polar residues. Ser-78 carries the phosphoserine; by MAPKAPK2 and PLK4 modification. Phosphoserine occurs at positions 89, 105, 114, 146, and 150. Residues 138–148 (LPSNARSSSAL) are compositionally biased toward polar residues. Over residues 232–245 (NVSSATHSARNNTG) the composition is skewed to polar residues. Residues 269–289 (NQATVTIQRWYRHQVQRRGAG) form the IQ domain. The tract at residues 301–429 (REEQRQRSGE…PQQPPEDRTQ (129 aa)) is disordered. Basic and acidic residues-rich tracts occupy residues 317-333 (HQQK…EKAR) and 360-369 (GPPENPRETR). Ser-381 carries the phosphoserine modification. Thr-383 carries the post-translational modification Phosphothreonine. Phosphoserine is present on residues Ser-453, Ser-489, Asp-496, Ser-499, Ser-731, and Ser-798. Residues 1047 to 1076 (KEEAVSSLRTQHEAAVKRADHLEELLEQHR) are compositionally biased toward basic and acidic residues. Residues 1047-1083 (KEEAVSSLRTQHEAAVKRADHLEELLEQHRRPTPSTK) form a disordered region.

Belongs to the CEP131 family. In terms of assembly, self-associates. Associates with the centriolar satellite BBSome protein complex. Interacts with BBS4; the interaction limits BBS4 availability for association with the BBSome complex, and hence negatively regulates ciliary localization of the BBSome complex. Interacts with MIB1. Interacts with PCM1; the interaction increases in response to ultraviolet light (UV) radiation. Associates with microtubules; association with microtubules is reduced in response to cellular stress, such as UV stimulation, in a process that requires p38 MAP kinase signaling. Interacts with CEP290, DCTN1, PCNT, PCM1 and CEP152. Interacts with 14-3-3 proteins following UV-induced phosphorylation by MAPKAPK2; this inhibits formation of novel centriolar satellites. Interacts with SDCCAG8. Interacts with CCDC61. Interacts with PLK4. Post-translationally, ubiquitinated. Undergoes monoubiquitination catalyzed by the E3 ubiquitin-protein ligase MIB1 in proliferating cells, preventing cilia formation. Monoubiquitination by MIB1 is inhibited in response to cellular stress, such as ultraviolet light (UV) radiation or heat shock, resulting in cilia formation initiation. MAPKAPK2-dependent phosphorylation at Ser-47 and Ser-78 occurs in response to cellular stress such as exposure to ultraviolet irradiation and promotes binding to 14-3-3 proteins which leads to cytoplasmic sequestration of CEP131 and blocks formation of new centriolar satellites. Phosphorylation at Ser-78 mediated by PLK4 is essential for proper organization and integrity of centriolar satellites but is dispensable for its localization to centrioles and its function in ciliogenesis.

The protein localises to the cytoplasm. It localises to the cytoskeleton. The protein resides in the microtubule organizing center. It is found in the centrosome. Its subcellular location is the centriolar satellite. The protein localises to the centriole. It localises to the cilium basal body. The protein resides in the cytoplasmic vesicle. It is found in the secretory vesicle. Its subcellular location is the acrosome. Component of centriolar satellites contributing to the building of a complex and dynamic network required to regulate cilia/flagellum formation. In proliferating cells, MIB1-mediated ubiquitination induces its sequestration within centriolar satellites, precluding untimely cilia formation initiation. In contrast, during normal and ultraviolet or heat shock cellular stress-induced ciliogenesis, its non-ubiquitinated form is rapidly displaced from centriolar satellites and recruited to centrosome/basal bodies in a microtubule- and p38 MAPK-dependent manner. Also acts as a negative regulator of BBSome ciliary trafficking. Plays a role in sperm flagellar formation; may be involved in the regulation of intraflagellar transport (IFT) and/or intramanchette (IMT) trafficking, which are important for axoneme extension and/or cargo delivery to the nascent sperm tail. Required for optimal cell proliferation and cell cycle progression; may play a role in the regulation of genome stability in non-ciliogenic cells. Involved in centriole duplication. Required for CEP152, WDR62 and CEP63 centrosomal localization and promotes the centrosomal localization of CDK2. Essential for maintaining proper centriolar satellite integrity. In Homo sapiens (Human), this protein is Centrosomal protein of 131 kDa (CEP131).